Reading from the N-terminus, the 137-residue chain is Nucleoside diphosphate kinase (137 aa).

Lys9, Phe58, Arg86, Thr92, Arg103, and Asn113 together coordinate ATP. Catalysis depends on His121, which acts as the Pros-phosphohistidine intermediate.

It belongs to the NDK family. In terms of assembly, homotetramer. Mg(2+) serves as cofactor.

The protein localises to the cytoplasm. It catalyses the reaction a 2'-deoxyribonucleoside 5'-diphosphate + ATP = a 2'-deoxyribonucleoside 5'-triphosphate + ADP. The catalysed reaction is a ribonucleoside 5'-diphosphate + ATP = a ribonucleoside 5'-triphosphate + ADP. Major role in the synthesis of nucleoside triphosphates other than ATP. The ATP gamma phosphate is transferred to the NDP beta phosphate via a ping-pong mechanism, using a phosphorylated active-site intermediate. The protein is Nucleoside diphosphate kinase of Streptococcus pneumoniae (strain P1031).